The sequence spans 62 residues: Small ribosomal subunit protein uS14 (62 aa).

Residues C25, C28, C41, and C44 each coordinate Zn(2+).

Belongs to the universal ribosomal protein uS14 family. Zinc-binding uS14 subfamily. As to quaternary structure, part of the 30S ribosomal subunit. Contacts proteins S3 and S10. It depends on Zn(2+) as a cofactor.

In terms of biological role, binds 16S rRNA, required for the assembly of 30S particles and may also be responsible for determining the conformation of the 16S rRNA at the A site. The polypeptide is Small ribosomal subunit protein uS14 (Hydrogenobaculum sp. (strain Y04AAS1)).